Consider the following 226-residue polypeptide: uncharacterized protein (226 aa).

Residues 203 to 225 (FGISDIYTSTLSFGLIISLFYLL) form a helical membrane-spanning segment.

It is found in the membrane. This is an uncharacterized protein from Acanthamoeba polyphaga (Amoeba).